An 89-amino-acid chain; its full sequence is HssA/B-like protein 14 (89 aa).

The protein belongs to the hssA/B family.

In Dictyostelium discoideum (Social amoeba), this protein is HssA/B-like protein 14 (hssl14).